A 193-amino-acid polypeptide reads, in one-letter code: CRIB domain-containing protein RIC5 (193 aa).

Residues 29–42 (IGIPTDVKHVAHIG) enclose the CRIB domain. The interval 42 to 193 (GWEGPSATTP…CAGLGSSTGR (152 aa)) is disordered. Residues 55-67 (HDFKPTDQTKTET) are compositionally biased toward basic and acidic residues. Polar residues predominate over residues 90–100 (STGNNSPTESP). Positions 123–134 (GSGSESGSGLEL) are enriched in low complexity.

Interacts with ARAC11/ROP1. In terms of tissue distribution, expressed in flowers and pollen.

The protein resides in the cell membrane. In terms of biological role, functions as a downstream effector of Rho-related GTP binding proteins of the 'Rho of Plants' (ROPs) family. Participates in the propagation of ROP GTPase signals in specific cellular responses. Is involved in pollen tube growth regulation through its interaction with ARAC11/ROP1. The chain is CRIB domain-containing protein RIC5 (RIC5) from Arabidopsis thaliana (Mouse-ear cress).